Reading from the N-terminus, the 275-residue chain is Ribosomal RNA small subunit methyltransferase A (275 aa).

S-adenosyl-L-methionine contacts are provided by Asn-19, Leu-21, Gly-46, Glu-71, Asp-94, and Asn-117.

It belongs to the class I-like SAM-binding methyltransferase superfamily. rRNA adenine N(6)-methyltransferase family. RsmA subfamily.

It localises to the cytoplasm. The catalysed reaction is adenosine(1518)/adenosine(1519) in 16S rRNA + 4 S-adenosyl-L-methionine = N(6)-dimethyladenosine(1518)/N(6)-dimethyladenosine(1519) in 16S rRNA + 4 S-adenosyl-L-homocysteine + 4 H(+). Specifically dimethylates two adjacent adenosines (A1518 and A1519) in the loop of a conserved hairpin near the 3'-end of 16S rRNA in the 30S particle. May play a critical role in biogenesis of 30S subunits. This is Ribosomal RNA small subunit methyltransferase A from Burkholderia multivorans (strain ATCC 17616 / 249).